A 306-amino-acid polypeptide reads, in one-letter code: Uracil phosphoribosyltransferase homolog (306 aa).

Disordered regions lie at residues 1-28 and 58-87; these read MATE…NPEP and SSVP…NYDA. Composition is skewed to polar residues over residues 13–28 and 70–79; these read CHNQ…NPEP and GGATFNSENN. GTP-binding positions include R130, R139, and 173–176; that span reads EKGN. Residue R183 participates in 5-phospho-alpha-D-ribose 1-diphosphate binding. R200 and R229 together coordinate GTP. 235–243 contributes to the 5-phospho-alpha-D-ribose 1-diphosphate binding site; that stretch reads YPILSTGNT. Uracil is bound at residue 296–298; the sequence is THF.

Belongs to the UPRTase family.

The protein localises to the cytoplasm. Its subcellular location is the nucleus. The polypeptide is Uracil phosphoribosyltransferase homolog (UPRT) (Bos taurus (Bovine)).